The following is a 131-amino-acid chain: Profilin-1 (131 aa).

This sequence belongs to the profilin family. Occurs in many kinds of cells as a complex with monomeric actin in a 1:1 ratio.

The protein localises to the cytoplasm. The protein resides in the cytoskeleton. Its function is as follows. Binds to actin and affects the structure of the cytoskeleton. At high concentrations, profilin prevents the polymerization of actin, whereas it enhances it at low concentrations. By binding to PIP2, it inhibits the formation of IP3 and DG. This Lilium longiflorum (Trumpet lily) protein is Profilin-1.